We begin with the raw amino-acid sequence, 270 residues long: 4-hydroxy-tetrahydrodipicolinate reductase (270 aa).

Residues 8–13 (GALGRM), aspartate 34, 102–104 (GTT), and 128–131 (SQNY) each bind NAD(+). Residue histidine 160 is the Proton donor/acceptor of the active site. Residue histidine 161 participates in (S)-2,3,4,5-tetrahydrodipicolinate binding. The active-site Proton donor is lysine 164. (S)-2,3,4,5-tetrahydrodipicolinate is bound at residue 170 to 171 (GT).

Belongs to the DapB family.

It is found in the cytoplasm. The enzyme catalyses (S)-2,3,4,5-tetrahydrodipicolinate + NAD(+) + H2O = (2S,4S)-4-hydroxy-2,3,4,5-tetrahydrodipicolinate + NADH + H(+). It carries out the reaction (S)-2,3,4,5-tetrahydrodipicolinate + NADP(+) + H2O = (2S,4S)-4-hydroxy-2,3,4,5-tetrahydrodipicolinate + NADPH + H(+). The protein operates within amino-acid biosynthesis; L-lysine biosynthesis via DAP pathway; (S)-tetrahydrodipicolinate from L-aspartate: step 4/4. Catalyzes the conversion of 4-hydroxy-tetrahydrodipicolinate (HTPA) to tetrahydrodipicolinate. In Methanococcus vannielii (strain ATCC 35089 / DSM 1224 / JCM 13029 / OCM 148 / SB), this protein is 4-hydroxy-tetrahydrodipicolinate reductase.